A 167-amino-acid chain; its full sequence is Respiratory supercomplex factor 1-A, mitochondrial (167 aa).

Residues 1-86 (MCSDFEEETS…TERKQRREFE (86 aa)) form the HIG1 domain. Helical transmembrane passes span 21-38 (EPLI…LYRA) and 53-75 (MFRA…GMYY). Residues 75–107 (YKTERKQRREFEKKVEERKAQEKRDAWLRELEA) adopt a coiled-coil conformation.

This sequence belongs to the RCF1 family. As to quaternary structure, associates with the respiratory chain complex III/complex IV supercomplex.

It localises to the mitochondrion membrane. Functionally, cytochrome c oxidase subunit which plays a role in assembly of respiratory supercomplexes. In Talaromyces marneffei (strain ATCC 18224 / CBS 334.59 / QM 7333) (Penicillium marneffei), this protein is Respiratory supercomplex factor 1-A, mitochondrial (rcf1-A).